The primary structure comprises 37 residues: MEVNTLAFIAVLLFLAVPTAFLLIPYVKTASASSGSN.

The helical transmembrane segment at 7–27 threads the bilayer; that stretch reads AFIAVLLFLAVPTAFLLIPYV.

Belongs to the PsbM family. PSII is composed of 1 copy each of membrane proteins PsbA, PsbB, PsbC, PsbD, PsbE, PsbF, PsbH, PsbI, PsbJ, PsbK, PsbL, PsbM, PsbT, PsbX, PsbY, PsbZ, Psb30/Ycf12, at least 3 peripheral proteins of the oxygen-evolving complex and a large number of cofactors. It forms dimeric complexes.

The protein resides in the plastid. It is found in the chloroplast thylakoid membrane. In terms of biological role, one of the components of the core complex of photosystem II (PSII). PSII is a light-driven water:plastoquinone oxidoreductase that uses light energy to abstract electrons from H(2)O, generating O(2) and a proton gradient subsequently used for ATP formation. It consists of a core antenna complex that captures photons, and an electron transfer chain that converts photonic excitation into a charge separation. This subunit is found at the monomer-monomer interface. The polypeptide is Photosystem II reaction center protein M (Pinus thunbergii (Japanese black pine)).